Here is a 25-residue protein sequence, read N- to C-terminus: Toxin LyeTx 1 (25 aa).

At L25 the chain carries Leucine amide.

In terms of tissue distribution, expressed by the venom gland.

Its subcellular location is the secreted. Its function is as follows. Has antimicrobial activity against Gram-positive bacterium S.aureus (MIC=3.79 uM), Gram-negative bacterium E.coli (MIC=7.81 uM) and yeasts C.krusei (MIC=26.3 uM) and C.neoformans (MIC=13.2 uM). Has hemolytic activity against rabbit erythrocytes. Forms pores in lipid bilayers in vitro; pore formation is reduced when cholesterol is present in the bilayers. This Lycosa erythrognatha (Wolf spider) protein is Toxin LyeTx 1.